The sequence spans 547 residues: Glucocorticoid-induced transcript 1 protein (547 aa).

Over residues 1 to 13 (MSTASSSSSSSSS) the composition is skewed to low complexity. 2 disordered regions span residues 1–55 (MSTA…APAA) and 72–285 (LLRG…LSNI). Ser20 is modified (phosphoserine). Over residues 26 to 38 (SAAGSPPAVAAAG) the composition is skewed to low complexity. Positions 39–50 (SGNGAGGGGGVG) are enriched in gly residues. Ser79, Ser105, Ser107, and Ser108 each carry phosphoserine. The span at 86–105 (AAAAASLGSLPGPGAARGPS) shows a compositional bias: low complexity. Phosphothreonine is present on Thr110. The segment covering 130 to 145 (RSPESHRRSSSPERRS) has biased composition (basic and acidic residues). The segment covering 162–177 (RTSSTIRRTSSLDTIT) has biased composition (low complexity). Residues Ser171 and Ser172 each carry the phosphoserine modification. A phosphothreonine mark is found at Thr175 and Thr177. Residues 187–201 (RDPHVHYPSCMKDKA) are compositionally biased toward basic and acidic residues. Position 223 is a phosphoserine (Ser223). A coiled-coil region spans residues 225–254 (GSADQLKEQIAKLRQQLQRSKQSSRHSKEK). The segment covering 236–245 (KLRQQLQRSK) has biased composition (low complexity). A Phosphoserine modification is found at Ser258. A compositionally biased stretch (polar residues) spans 265 to 276 (ITISHTQATGSR). Thr266 is modified (phosphothreonine). Ser303 is modified (phosphoserine). The segment covering 319–331 (EVSKPLDIPDGRR) has biased composition (basic and acidic residues). The interval 319-417 (EVSKPLDIPD…KPNNSYMFKR (99 aa)) is disordered. Positions 339–356 (RSSSTRSIDTQTPSVQER) are enriched in polar residues. Phosphothreonine is present on Thr343. The residue at position 345 (Ser345) is a Phosphoserine. Position 350 is a phosphothreonine (Thr350). The segment covering 357-369 (SSSCSSHSPCVSP) has biased composition (low complexity). Ser394, Ser398, Ser406, Ser412, and Ser480 each carry phosphoserine. The segment covering 505–520 (SLSDDTSTAGSMEASV) has biased composition (polar residues). A disordered region spans residues 505–530 (SLSDDTSTAGSMEASVQQPSQQQQLL). The span at 521 to 530 (QQPSQQQQLL) shows a compositional bias: low complexity.

As to expression, predominantly expressed in lung, spleen, thymus and testis and, at lower levels, in brain, bone marrow, peripheral leukocytes, skin and trachea.

The sequence is that of Glucocorticoid-induced transcript 1 protein (GLCCI1) from Homo sapiens (Human).